The following is a 194-amino-acid chain: Glycerol-3-phosphate acyltransferase (194 aa).

Helical transmembrane passes span leucine 2–leucine 22, serine 51–alanine 71, tryptophan 80–phenylalanine 100, valine 112–valine 132, and phenylalanine 155–tryptophan 175.

Belongs to the PlsY family. Probably interacts with PlsX.

Its subcellular location is the cell inner membrane. It carries out the reaction an acyl phosphate + sn-glycerol 3-phosphate = a 1-acyl-sn-glycero-3-phosphate + phosphate. It participates in lipid metabolism; phospholipid metabolism. Its function is as follows. Catalyzes the transfer of an acyl group from acyl-phosphate (acyl-PO(4)) to glycerol-3-phosphate (G3P) to form lysophosphatidic acid (LPA). This enzyme utilizes acyl-phosphate as fatty acyl donor, but not acyl-CoA or acyl-ACP. This chain is Glycerol-3-phosphate acyltransferase, found in Geobacter metallireducens (strain ATCC 53774 / DSM 7210 / GS-15).